Reading from the N-terminus, the 74-residue chain is Putative membrane protein insertion efficiency factor (74 aa).

Belongs to the UPF0161 family.

It localises to the cell membrane. Its function is as follows. Could be involved in insertion of integral membrane proteins into the membrane. This Anoxybacillus flavithermus (strain DSM 21510 / WK1) protein is Putative membrane protein insertion efficiency factor.